A 446-amino-acid chain; its full sequence is Phosphoglucosamine mutase (446 aa).

S103 (phosphoserine intermediate) is an active-site residue. Residues S103, D242, D244, and D246 each coordinate Mg(2+). S103 bears the Phosphoserine mark.

Belongs to the phosphohexose mutase family. Requires Mg(2+) as cofactor. Post-translationally, activated by phosphorylation.

The enzyme catalyses alpha-D-glucosamine 1-phosphate = D-glucosamine 6-phosphate. In terms of biological role, catalyzes the conversion of glucosamine-6-phosphate to glucosamine-1-phosphate. The protein is Phosphoglucosamine mutase of Vibrio vulnificus (strain CMCP6).